Consider the following 67-residue polypeptide: MSVLPVVVVFGMSFPPIFIEIIVSLMLFWLIRRAITPTGLYDLVWHPALFNTALYCCLFYVVSRLFV.

The next 2 helical transmembrane spans lie at 3–23 and 43–63; these read VLPV…EIIV and LVWH…YVVS.

This sequence belongs to the AaeX family.

The protein resides in the cell membrane. This chain is Protein AaeX, found in Erwinia tasmaniensis (strain DSM 17950 / CFBP 7177 / CIP 109463 / NCPPB 4357 / Et1/99).